Here is a 213-residue protein sequence, read N- to C-terminus: Cell wall protein PGA62 (213 aa).

The signal sequence occupies residues 1–18 (MQFSSAVVLSAVAGSALA). N-linked (GlcNAc...) asparagine glycosylation is present at Asn22. The segment at 120–194 (CPLPSTEAPG…APAVSTAEAG (75 aa)) is disordered. The span at 145–172 (PVPTTAAESSPAKTTAAESSPAQETTPK) shows a compositional bias: polar residues. Low complexity predominate over residues 173-194 (TVAAESSSAETTAPAVSTAEAG). The GPI-anchor amidated glycine moiety is linked to residue Gly194. Residues 195-213 (AAANAVPVAAGLLALAALF) constitute a propeptide, removed in mature form.

It belongs to the HWP1 family. Post-translationally, N- and O-glycosylated. The GPI-anchor is attached to the protein in the endoplasmic reticulum and serves to target the protein to the cell surface. There, the glucosamine-inositol phospholipid moiety is cleaved off and the GPI-modified mannoprotein is covalently attached via its lipidless GPI glycan remnant to the 1,6-beta-glucan of the outer cell wall layer.

The protein localises to the secreted. The protein resides in the cell wall. Its subcellular location is the membrane. Its function is as follows. Cell wall protein necessary for cell wall integrity. Plays only a minor role in hyphal morphogenesis and is not critical to biofilm formation. The sequence is that of Cell wall protein PGA62 (PGA62) from Candida albicans (strain SC5314 / ATCC MYA-2876) (Yeast).